The following is a 2188-amino-acid chain: Glutamate synthase 2 [NADH], chloroplastic (2188 aa).

Residues 1–30 (MSAAQGLALKLRAAPAAGGVRGEKRRRAAS) constitute a chloroplast transit peptide. 2 disordered regions span residues 14-40 (APAA…ARPR) and 61-94 (VAPR…PESS). Residues 65 to 80 (ASASRQAEAGAGAGAA) are compositionally biased toward low complexity. Cys107 (nucleophile) is an active-site residue. Positions 107–511 (CGVGFIAELS…PGMMLLVDFE (405 aa)) constitute a Glutamine amidotransferase type-2 domain. 1198–1255 (LAETHQTLVANGLRGRAVLQTDGQMKTGRDVAVACLLGAEEFGFSTAPLITLGCIMMR) lines the FMN pocket. 3 residues coordinate [3Fe-4S] cluster: Cys1251, Cys1257, and Cys1262. 1974-1988 (GGGDTGTDCIGTSIR) contacts NAD(+).

This sequence belongs to the glutamate synthase family. As to quaternary structure, monomer. Requires [3Fe-4S] cluster as cofactor. FAD serves as cofactor. FMN is required as a cofactor. Expressed in leaf blades and sheaths.

It is found in the plastid. Its subcellular location is the chloroplast. It catalyses the reaction 2 L-glutamate + NAD(+) = L-glutamine + 2-oxoglutarate + NADH + H(+). Its pathway is amino-acid biosynthesis; L-glutamate biosynthesis via GLT pathway; L-glutamate from 2-oxoglutarate and L-glutamine (NAD(+) route): step 1/1. The protein operates within energy metabolism; nitrogen metabolism. Involved in glutamate biosynthesis. This Oryza sativa subsp. japonica (Rice) protein is Glutamate synthase 2 [NADH], chloroplastic.